The chain runs to 719 residues: Calpain-12 (719 aa).

The 297-residue stretch at leucine 45–serine 341 folds into the Calpain catalytic domain. Residues cysteine 105, histidine 259, and asparagine 283 contribute to the active site. Residues proline 342–serine 540 form a domain III region. Residues aspartate 393–glycine 402 show a composition bias toward acidic residues. The segment at aspartate 393–glycine 418 is disordered. The segment at leucine 541 to serine 719 is domain IV. The EF-hand domain maps to glycine 620–histidine 655. The Ca(2+) site is built by aspartate 633, aspartate 635, serine 637, threonine 639, and glutamate 644.

This sequence belongs to the peptidase C2 family.

In terms of biological role, calcium-regulated non-lysosomal thiol-protease. The protein is Calpain-12 (CAPN12) of Homo sapiens (Human).